Reading from the N-terminus, the 116-residue chain is MVPGELLVDDGEHPLIPCRRTVTLVVRNSADRPIQVGSHYHFAETNGALDFDRAAARGMRLNITSGTAVRFEPGQQRTVELVDFAGSRTVYGFRGDIQGPLDAGTAETAPGLPQQP.

Residues Ile97 to Pro116 are disordered.

The protein belongs to the urease beta subunit family. As to quaternary structure, heterotrimer of UreA (gamma), UreB (beta) and UreC (alpha) subunits. Three heterotrimers associate to form the active enzyme.

The protein resides in the cytoplasm. The catalysed reaction is urea + 2 H2O + H(+) = hydrogencarbonate + 2 NH4(+). Its pathway is nitrogen metabolism; urea degradation; CO(2) and NH(3) from urea (urease route): step 1/1. The chain is Urease subunit beta from Paracidovorax citrulli (strain AAC00-1) (Acidovorax citrulli).